The primary structure comprises 363 residues: Protein-glutamate methylesterase/protein-glutamine glutaminase 2 (363 aa).

The 118-residue stretch at 7 to 124 (RVLVVDDSAL…SLTLENVADE (118 aa)) folds into the Response regulatory domain. Aspartate 58 is subject to 4-aspartylphosphate. In terms of domain architecture, CheB-type methylesterase spans 160–357 (PVASRTTPSK…NLLMVQSAAQ (198 aa)). Residues serine 176, histidine 203, and aspartate 299 contribute to the active site.

The protein belongs to the CheB family. Phosphorylated by CheA. Phosphorylation of the N-terminal regulatory domain activates the methylesterase activity.

The protein localises to the cytoplasm. The enzyme catalyses [protein]-L-glutamate 5-O-methyl ester + H2O = L-glutamyl-[protein] + methanol + H(+). It catalyses the reaction L-glutaminyl-[protein] + H2O = L-glutamyl-[protein] + NH4(+). In terms of biological role, involved in chemotaxis. Part of a chemotaxis signal transduction system that modulates chemotaxis in response to various stimuli. Catalyzes the demethylation of specific methylglutamate residues introduced into the chemoreceptors (methyl-accepting chemotaxis proteins or MCP) by CheR. Also mediates the irreversible deamidation of specific glutamine residues to glutamic acid. The sequence is that of Protein-glutamate methylesterase/protein-glutamine glutaminase 2 from Koribacter versatilis (strain Ellin345).